We begin with the raw amino-acid sequence, 279 residues long: uncharacterized protein (279 aa).

The first 19 residues, methionine 1 to alanine 19, serve as a signal peptide directing secretion. Cysteine 20 carries the N-palmitoyl cysteine lipid modification. A lipid anchor (S-diacylglycerol cysteine) is attached at cysteine 20.

This sequence belongs to the MG439/MG440 family.

The protein localises to the cell membrane. This is an uncharacterized protein from Mycoplasma pneumoniae (strain ATCC 29342 / M129 / Subtype 1) (Mycoplasmoides pneumoniae).